The primary structure comprises 502 residues: Rab11 family-interacting protein 4B (502 aa).

Disordered stretches follow at residues 1–49 and 71–98; these read MSIQ…EEGI and SALS…TTSS. Over residues 15–29 the composition is skewed to basic and acidic residues; that stretch reads EEGRGVERDSDRDSA. The span at 71 to 80 shows a compositional bias: polar residues; the sequence is SALSSASLNE. A compositionally biased stretch (acidic residues) spans 81 to 93; it reads EQFEDYGEGEDGD. Positions 228-482 form a coiled coil; that stretch reads DVKTKLKQEN…EEINLRLRQY (255 aa). One can recognise an FIP-RBD domain in the interval 439-501; it reads EAKNLFATQT…DHNPSILEIK (63 aa).

In terms of assembly, homodimer. Forms a complex with Rab11 (rab11a or rab11b) and arf6.

The protein localises to the recycling endosome membrane. The protein resides in the cleavage furrow. Its subcellular location is the midbody. It is found in the cytoplasmic vesicle. Its function is as follows. Acts as a regulator of endocytic traffic by participating in membrane delivery. Required for the abscission step in cytokinesis, possibly by acting as an 'address tag' delivering recycling endosome membranes to the cleavage furrow during late cytokinesis. The polypeptide is Rab11 family-interacting protein 4B (rab11fip4b) (Danio rerio (Zebrafish)).